The primary structure comprises 263 residues: Glucosamine-6-phosphate deaminase (263 aa).

The Proton acceptor; for enolization step role is filled by Asp-72. The active-site For ring-opening step is the Asp-141. His-143 acts as the Proton acceptor; for ring-opening step in catalysis. The active-site For ring-opening step is the Glu-148.

It belongs to the glucosamine/galactosamine-6-phosphate isomerase family. NagB subfamily.

The catalysed reaction is alpha-D-glucosamine 6-phosphate + H2O = beta-D-fructose 6-phosphate + NH4(+). It participates in amino-sugar metabolism; N-acetylneuraminate degradation; D-fructose 6-phosphate from N-acetylneuraminate: step 5/5. Its activity is regulated as follows. Allosterically activated by N-acetylglucosamine 6-phosphate (GlcNAc6P). Functionally, catalyzes the reversible isomerization-deamination of glucosamine 6-phosphate (GlcN6P) to form fructose 6-phosphate (Fru6P) and ammonium ion. This Porphyromonas gingivalis (strain ATCC 33277 / DSM 20709 / CIP 103683 / JCM 12257 / NCTC 11834 / 2561) protein is Glucosamine-6-phosphate deaminase.